The primary structure comprises 1040 residues: Multidrug resistance protein MdtB (1040 aa).

12 helical membrane-spanning segments follow: residues 16 to 36, 347 to 367, 369 to 389, 396 to 416, 440 to 460, 472 to 492, 537 to 557, 863 to 883, 888 to 908, 911 to 931, 968 to 988, and 998 to 1018; these read FIMR…AGII, LMMA…NIPA, IIPG…MVFL, LTLM…IVVI, IGFT…PLLF, FAIT…TLTP, WLTL…WVFI, LGST…VLGI, FIHP…ALLA, IAGS…IGIV, ILMT…STGV, and IGMV…TPVI.

It belongs to the resistance-nodulation-cell division (RND) (TC 2.A.6) family. MdtB subfamily. As to quaternary structure, part of a tripartite efflux system composed of MdtA, MdtB and MdtC. MdtB forms a heteromultimer with MdtC.

Its subcellular location is the cell inner membrane. The MdtABC tripartite complex confers resistance against novobiocin and deoxycholate. The chain is Multidrug resistance protein MdtB from Escherichia coli (strain SE11).